A 162-amino-acid polypeptide reads, in one-letter code: Phosphopantetheine adenylyltransferase (162 aa).

Ser-9 contacts substrate. ATP-binding positions include 9 to 10 (SF) and His-17. Positions 41, 73, and 87 each coordinate substrate. Residues 88-90 (GLR), Glu-98, and 123-129 (YAHLSSS) each bind ATP.

It belongs to the bacterial CoaD family. In terms of assembly, homohexamer. It depends on Mg(2+) as a cofactor.

It is found in the cytoplasm. It carries out the reaction (R)-4'-phosphopantetheine + ATP + H(+) = 3'-dephospho-CoA + diphosphate. The protein operates within cofactor biosynthesis; coenzyme A biosynthesis; CoA from (R)-pantothenate: step 4/5. Functionally, reversibly transfers an adenylyl group from ATP to 4'-phosphopantetheine, yielding dephospho-CoA (dPCoA) and pyrophosphate. The chain is Phosphopantetheine adenylyltransferase from Symbiobacterium thermophilum (strain DSM 24528 / JCM 14929 / IAM 14863 / T).